Here is a 273-residue protein sequence, read N- to C-terminus: Elongation factor Ts (273 aa).

The tract at residues 79 to 82 (TDFV) is involved in Mg(2+) ion dislocation from EF-Tu.

It belongs to the EF-Ts family.

It is found in the cytoplasm. Associates with the EF-Tu.GDP complex and induces the exchange of GDP to GTP. It remains bound to the aminoacyl-tRNA.EF-Tu.GTP complex up to the GTP hydrolysis stage on the ribosome. This is Elongation factor Ts from Hydrogenobaculum sp. (strain Y04AAS1).